The following is a 27-amino-acid chain: Flagellar filament 31.5 kDa core protein (27 aa).

The protein belongs to the bacterial flagellin family. In terms of assembly, the flagellum consists of an outer layer composed of repeating units of FlaA around a core that contains one or all of five antigenically related polypeptides.

Its subcellular location is the periplasmic flagellum. The protein resides in the periplasm. Functionally, component of the core of the flagella. This is Flagellar filament 31.5 kDa core protein from Spirochaeta aurantia.